The chain runs to 113 residues: Hydrogenase maturation factor HybF (113 aa).

Ni(2+) contacts are provided by His-2 and Glu-3. Residues Cys-73, Cys-76, Cys-89, and Cys-92 each contribute to the Zn(2+) site.

Belongs to the HypA/HybF family. HybF subfamily.

Involved in the maturation of [NiFe] hydrogenases. Required for nickel insertion into the metal center of the hydrogenase. The chain is Hydrogenase maturation factor HybF from Morganella morganii (Proteus morganii).